We begin with the raw amino-acid sequence, 195 residues long: Imidazoleglycerol-phosphate dehydratase (195 aa).

It belongs to the imidazoleglycerol-phosphate dehydratase family.

It is found in the cytoplasm. The enzyme catalyses D-erythro-1-(imidazol-4-yl)glycerol 3-phosphate = 3-(imidazol-4-yl)-2-oxopropyl phosphate + H2O. The protein operates within amino-acid biosynthesis; L-histidine biosynthesis; L-histidine from 5-phospho-alpha-D-ribose 1-diphosphate: step 6/9. This is Imidazoleglycerol-phosphate dehydratase from Azoarcus sp. (strain BH72).